Consider the following 2184-residue polypeptide: MADPIMDLFDDPNLFGLDSLTGDSFGRDGPDTIDDALGLGNVLGPLEPITDRVGLPGADVGNNEVKQQTESQVLPDNPALMSATEIMQPIQLPTNQETLNQGNPFMGASNAGAPKIMILKAPAGMTVGACPVTQIQTLTPHQAANGGKVAFAKVLTGTPLRPGVSIVSGNTVLAKMPSTGVAGQVGAVRPVRQLLLQPVRASAAPGSSESNTGIKPAITLTSAPQQGDPKRITLVLQQPSQVGATAQQGQRHVVLGGLPGKIVLQGNQLAALTQAKTPQGQPAKVVTIQLQVQQQPGAAGQTPQKFQIVQQAPGGVAIAPSGQHTHMLNQQGVQRLSVPLKVVLQPQAGSSQGTAQGLSVVKVLNASEVANLTASQTVVKTSTGGGESRKLDSQKKQEKANRIVAEAIARARARGEQNIPRVLNEDELPSVNPEDDDGSRRKRKKKKGETSDRSKDEKPKKVKGSGSLRSRSKGKPSTITPIVGKKRKRNPSSDNSDAEIMASQASPAEDEDSVQKRRSNRQVKRKKYTEDLDIKITDDEDDEEVDVTGPVKTEPVLLPEPMPLPDSEAVPSMQFFVENPSEEDAAIVDKILSMRLAKKELPTGEYVEVEEYFVKYKNYSYLHCEWATIEQLERDKRIHQKLKRFKTKMTQMQHFLQEDEESFNPDYVEVDRILDESHSTDKDNGEPVVYYLVKWCSLPYEDSTWELKEDVDDGKIEEFKRIEARQPNLKRVARPAATSWKKLELSREYQNGNQLREYQLEGVNWLLFNWYNRQNCILADEMGLGKTIQSITFLQEVYNVGIRGPFLVIAPLSTITNWEREFGSWTQMNTIVYHGSLASRQMIQQYEMYCKDSKGRLIPGAYKFDALITTFEMVLSDCPELREIEWRCVIIDEAHRLKNRNCKLLDSLKHMDLEHKVLLTGTPLQNTVEELFSLLHFLEPTQFSSEAEFLKDFGDLKTEEQVQKLQAILKPMMLRRLKEDVEKNLAPKQETIIEVELTNIQKKYYRAILEKNFSFLTKGASQSNTPNLLNTMMELRKCCNHPYLITGAEEKIISEFREATPVVPPDFHVQAMVRSSGKLVLIDKLLPKLRAGGHKVLIFSQMVRCLDILEDYLIQRRYLYERIDGRVRGNMRQAAIDRFSRPDSDRFVFLLCTRAGGLGINLTAADTCIIFDSDWNPQNDLQAQARCHRIGQSKAVKIYRLITRNSYEREMFDKASLKLGLDKAVLQSMSGRDNHLSGPIQQFTKKEIEDLLRKGAYAAIMDEDDEGSKFCEEDIDQILLRRTTTITIESEGKGSTFSKASFVASENRTDISLDDPNFWQKWAKKADLDLDLLSSKNTLVIDTPRIRKQTRHFTNKDDDMVEFSDLESDDDDRPKARRQDRKHGYGRTDCFRVEKHLLVYGWGRWRDILTHGRFKRGMNERDVEKICRAILVYCLLHYRGDENIKSFIWDLITPAENGKTKQLQNHSGLSIPVPRGRKGKKVKSQSSFDIHKADWIHKYNPDTLFQDEGYKKHLKHQCNKVLLRVRMLYFLRQEVIGNQAMKVLSGVEARQIDIWFPQVDQVEVPSRWWDREADKSLLIGVFKHGYEKYNTMRADPALCFLEKVGGPDEQAIAAEHHAQDFSELPDGGDFDRDIEDPEYKPLHAQKDPEDEIDSLMMDEEISVVDGEEATAMPSGMLWPPGSALTARLRRLITAYQRSYKREQLKLEAEERGDKRRKRCEAAFKLKEIARREKQQRWTRREACDFFRVLSSFGVEYDPDTQLYDWQRFRGLARLDKKTDESLLKYFHGFVAMCRQVCRLPPAAGDEPPDPSLFIEPISEERASRALFRLDLLRRVREQVLCHPLLIPRLSLCRPDPELPEWWESGRHDNELLQGAARYGLSRTDLTILQDHAFSFLRCQISYFQSRGISGHSRPSTPTTAPSVPTERQPSHLASLSSSVSCSPAPRRSSSCSSSSHSSNSEDSSDESNGVKVKPNAGLSHARLYDEESRLSLTASPADLTTEDSIQTALETPHSTDWPKDRVLICRIEQVCSAVLTGKWSSPRRLSDPPSDSPDSLPPTPEQQSPAHFTQIRPAPDPKEFTIQIKSEEGLKIKFQKHKFMGNGALDSAPHTQKKKSKKKMDLDMDTRIPVVNQKDGTLLLGEEAPLRCQLPEWLHRNPDFMVDPRFIAVSGYWIPYINRGKHFL.

Disordered regions lie at residues 379–399 (VKTSTGGGESRKLDSQKKQEK) and 419–527 (IPRV…KRKK). The segment covering 387-399 (ESRKLDSQKKQEK) has biased composition (basic and acidic residues). Acidic residues predominate over residues 425–437 (EDELPSVNPEDDD). Basic and acidic residues predominate over residues 448–459 (GETSDRSKDEKP). The segment covering 516–527 (KRRSNRQVKRKK) has biased composition (basic residues). Chromo domains follow at residues 586–653 (AIVD…TQMQ) and 668–734 (VEVD…RVAR). The Helicase ATP-binding domain maps to 767 to 941 (LFNWYNRQNC…FSLLHFLEPT (175 aa)). ATP is bound at residue 780–787 (DEMGLGKT). A DEAH box motif is present at residues 892–895 (DEAH). The region spanning 1081–1252 (LIDKLLPKLR…FTKKEIEDLL (172 aa)) is the Helicase C-terminal domain. Disordered regions lie at residues 1907–1989 (GISG…EESR) and 2039–2076 (WSSPRRLSDPPSDSPDSLPPTPEQQSPAHFTQIRPAPD). Composition is skewed to low complexity over residues 1912–1961 (SRPS…SNSE) and 2040–2054 (SSPRRLSDPPSDSPD).

It belongs to the SNF2/RAD54 helicase family. CHD8 subfamily. In terms of assembly, component of some MLL1/MLL complex.

It localises to the nucleus. The catalysed reaction is ATP + H2O = ADP + phosphate + H(+). Its function is as follows. ATP-dependent chromatin-remodeling factor, it slides nucleosomes along DNA; nucleosome sliding requires ATP. Acts as a transcription repressor by remodeling chromatin structure and recruiting histone H1 to target genes. Suppresses p53/tp53-mediated apoptosis by recruiting histone H1 and preventing p53/tp53 transactivation activity. Acts as a negative regulator of Wnt signaling pathway by regulating beta-catenin (ctnnb1) activity. Negatively regulates ctnnb1-targeted gene expression by being recruited specifically to the promoter regions of several ctnnb1 responsive genes. May also act as a transcription activator by participating in efficient U6 RNA polymerase III transcription. In Xenopus tropicalis (Western clawed frog), this protein is Chromodomain-helicase-DNA-binding protein 8.